A 313-amino-acid chain; its full sequence is MASLADRVRGNGRIAAGLLLNLLVSICIVFLNKWIYVHYGFPNMSLTLVHFVVTWLGLYVCQKLDIFAPKSLPPSKLLLLALSFCGFVVFTNLSLQNNTIGTYQLAKAMTTPVIIVIQTLCYKKTFSTKIRLTLIPITLGVILNSYYDVKFNFLGTVFAALGVLVTSLYQVWVGAKQHELQVNSMQLLYYQAPMSSAMLLVAVPFFEPVFAEGGIFGPWSVSALLMVLLSGVIAFMVNLSIYWIIGNTSPVTYNMFGHFKFCITLFGGYVLFKDPLSINQGLGMLCTLFGILAYTHFKLSEQEGSKSKLVQRP.

10 helical membrane passes run 17–37 (GLLL…WIYV), 40–60 (GFPN…GLYV), 77–97 (LLLL…SLQN), 100–120 (IGTY…IQTL), 130–147 (IRLT…NSYY), 153–173 (FLGT…QVWV), 187–206 (LLYY…VPFF), 225–245 (LMVL…YWII), 252–272 (TYNM…YVLF), and 275–295 (PLSI…LAYT).

The protein belongs to the TPT transporter family. SLC35E subfamily.

It is found in the membrane. In terms of biological role, putative transporter. In Bos taurus (Bovine), this protein is Solute carrier family 35 member E3 (SLC35E3).